A 747-amino-acid chain; its full sequence is Oxysterol-binding protein-related protein 11 (747 aa).

N-acetylmethionine is present on Met1. The interval 1-50 is disordered; sequence MQGGEPVSTMKVSESEGKLEGQATAVTPNKNSSCGGGISSSSSSRGGSAK. Ser15 carries the post-translational modification Phosphoserine. Thr27 is subject to Phosphothreonine. The 98-residue stretch at 58–155 folds into the PH domain; sequence MENVYGYLMK…WVSRLQICTQ (98 aa). At Tyr62 the chain carries Phosphotyrosine. Residues 158 to 188 are disordered; sequence TEAIGKNNPPLKSRSFSLASSSNSPISQRRP. Residues 170 to 184 show a composition bias toward low complexity; that stretch reads SRSFSLASSSNSPIS. Phosphoserine is present on residues Ser172, Ser174, Ser177, Ser181, Ser184, and Ser189. The segment covering 689–713 has biased composition (basic and acidic residues); it reads EIDKATEHKHTLEERQRTEERHRTE. Positions 689-714 are disordered; that stretch reads EIDKATEHKHTLEERQRTEERHRTET.

It belongs to the OSBP family. As to quaternary structure, heterodimer with OSBPL9. Present at highest levels in ovary, testis, kidney, liver, stomach, brain, and adipose tissue. Strong expression (at protein level) in epithelial cells of kidney tubules, testicular tubules, caecum, and skin. Present at low levels in subcutaneous and visceral adipose tissue (at protein level).

It localises to the late endosome membrane. Its subcellular location is the golgi apparatus. It is found in the trans-Golgi network membrane. The enzyme catalyses a 1,2-diacyl-sn-glycero-3-phospho-(1D-myo-inositol 4-phosphate)(out) + a 1,2-diacyl-sn-glycero-3-phospho-L-serine(in) = a 1,2-diacyl-sn-glycero-3-phospho-(1D-myo-inositol 4-phosphate)(in) + a 1,2-diacyl-sn-glycero-3-phospho-L-serine(out). Functionally, plays a role in regulating ADIPOQ and FABP4 levels in differentiating adipocytes and is also involved in regulation of adipocyte triglyceride storage. Weakly binds 25-hydroxycholesterol. Interacts with OSBPL9 to function as lipid transfer proteins. Together they form a heterodimer that localizes at the ER-trans-Golgi membrane contact sites, and exchanges phosphatidylserine (1,2-diacyl-sn-glycero-3-phospho-L-serine, PS) for phosphatidylinositol-4-phosphate (1,2-diacyl-sn-glycero-3-phospho-(1D-myo-inositol 4-phosphate), PI(4)P) between the two organelles, a step that is critical for sphingomyelin synthesis in the Golgi complex. This chain is Oxysterol-binding protein-related protein 11 (OSBPL11), found in Homo sapiens (Human).